Here is a 519-residue protein sequence, read N- to C-terminus: MLLKEIIREELEEDYYNYYNNLGEYSTGKGDDIKEITNNSQNKTNNNNNITILTSYNYNNNNNNNNNNNNNNNNNNNNNNNNNNNNNNNNNNNNNLFVSHSSILRSSSSPSSSESDEYSNGNNNNNSIINDLSSSSSSSSSSSSSSSSSITSPSSNHAYSPYNRSHKGIKISPNNKQVSSSGLLGSTMVSTSLIMGASNINNNNNNNNNNNNNNNNNNNNNNNNNNNNNNINIINNSNTNNNSSNSNNTINTFNFNNNLNNLNSINNNLNNYSNNMNINNQHNHQFNHYNNNNNNNNNNNNNNSDNNNIHFSNNGNMNIYNPNLSNFNNNNNNNNNNNNNNNNNNNNSNINNNNNNNKQIGNIVAKDDAEQLKESWKKIKEISNEFIKLSKLATKSDLQSIDLIPELRSKVMDLNNFLHVIEEKGELLKTDERQQKKRMESDKNAEKREKRREASRLLNNVCRNCKTTETPEWRKGPDGTKSLCNACGLHYAKNVKREAAGLHHLNEVGKKVDLTSILN.

Disordered stretches follow at residues 25–182, 198–249, 273–359, and 431–453; these read YSTG…SSSG, SNIN…SNNT, SNNM…NNKQ, and DERQ…KRRE. The span at 37 to 156 shows a compositional bias: low complexity; it reads TNNSQNKTNN…SSSITSPSSN (120 aa). A compositionally biased stretch (polar residues) spans 172–182; sequence SPNNKQVSSSG. Residues 273–357 are compositionally biased toward low complexity; that stretch reads SNNMNINNQH…SNINNNNNNN (85 aa). The stretch at 429–461 forms a coiled coil; that stretch reads KTDERQQKKRMESDKNAEKREKRREASRLLNNV. The GATA-type zinc finger occupies 462 to 487; that stretch reads CRNCKTTETPEWRKGPDGTKSLCNAC.

The sequence is that of GATA zinc finger domain-containing protein 8 (gtaH) from Dictyostelium discoideum (Social amoeba).